The primary structure comprises 112 residues: Cortistatin (112 aa).

The signal sequence occupies residues 1–27; it reads MGGCSTRGKRPSALSLLLLLLLSGIAA. A propeptide spanning residues 28–81 is cleaved from the precursor; sequence SALPLESGPTGQDSVQDATGGRRTGLLTFLAWWHEWASQDSSSTAFEGGTPELS. Positions 66 to 101 are disordered; sequence QDSSSTAFEGGTPELSKRQERPPLQQPPHRDKKPCK. A disulfide bond links Cys100 and Cys111.

Belongs to the somatostatin family. As to expression, interneurons in the cerebral cortex and hippocampus.

It is found in the secreted. In terms of biological role, neuropeptide with neuronal depressant and sleep-modulating properties. The sequence is that of Cortistatin (Cort) from Rattus norvegicus (Rat).